Reading from the N-terminus, the 402-residue chain is Bacillibactin exporter (402 aa).

Transmembrane regions (helical) follow at residues 4-24 (IIAL…LIPV), 39-59 (VSLI…IAGY), 69-89 (ILLP…FAST), 104-124 (LQGI…GDLF), 162-182 (FVPF…VLFL), 212-232 (WLYT…GVLF), 247-267 (VAKG…SFIA), 278-298 (MKFC…ALWW), 302-322 (FYFL…ALPA), 342-362 (FYNS…AALM), and 368-388 (IIFI…LFTV).

This sequence belongs to the major facilitator superfamily.

The protein resides in the cell membrane. Its function is as follows. Involved in secretion of bacillibactin. The chain is Bacillibactin exporter (ymfD) from Bacillus subtilis (strain 168).